Consider the following 87-residue polypeptide: Mitochondrial import inner membrane translocase subunit TIM9 (87 aa).

The Twin CX3C motif motif lies at 35 to 59 (CFSDCVNDFTSSKLTSKEQTCIMRC). Cystine bridges form between Cys-35-Cys-59 and Cys-39-Cys-55.

This sequence belongs to the small Tim family. Heterohexamer; composed of 3 copies of TIM9 and 3 copies of TIM10, named soluble 70 kDa complex. Associates with the TIM22 complex, whose core is composed of TIM22 and TIM54. Interacts with the transmembrane regions of multi-pass transmembrane proteins in transit.

The protein localises to the mitochondrion inner membrane. Functionally, mitochondrial intermembrane chaperone that participates in the import and insertion of multi-pass transmembrane proteins into the mitochondrial inner membrane. Also required for the transfer of beta-barrel precursors from the TOM complex to the sorting and assembly machinery (SAM complex) of the outer membrane. Acts as a chaperone-like protein that protects the hydrophobic precursors from aggregation and guide them through the mitochondrial intermembrane space. The sequence is that of Mitochondrial import inner membrane translocase subunit TIM9 (TIM9) from Eremothecium gossypii (strain ATCC 10895 / CBS 109.51 / FGSC 9923 / NRRL Y-1056) (Yeast).